Reading from the N-terminus, the 90-residue chain is Small ribosomal subunit protein uS17 (90 aa).

This sequence belongs to the universal ribosomal protein uS17 family. In terms of assembly, part of the 30S ribosomal subunit.

Functionally, one of the primary rRNA binding proteins, it binds specifically to the 5'-end of 16S ribosomal RNA. In Cutibacterium acnes (strain DSM 16379 / KPA171202) (Propionibacterium acnes), this protein is Small ribosomal subunit protein uS17.